The chain runs to 356 residues: 3-deoxy-alpha-D-manno-octulosonate 8-oxidase (356 aa).

Belongs to the iron-containing alcohol dehydrogenase family. The cofactor is a divalent metal cation.

The catalysed reaction is 3-deoxy-alpha-D-manno-oct-2-ulosonate + O2 = 3,8-dideoxy-8-oxo-alpha-D-manno-octulosonate + H2O2. It participates in bacterial outer membrane biogenesis; lipopolysaccharide biosynthesis. With respect to regulation, inhibited by EDTA. Catalyzes the first step of the biosynthesis of Kdo8N (8-amino-3,8-dideoxy-D-manno-octulosonate) from Kdo (3-deoxy-D-manno-octulosonate). The protein is 3-deoxy-alpha-D-manno-octulosonate 8-oxidase of Shewanella oneidensis (strain ATCC 700550 / JCM 31522 / CIP 106686 / LMG 19005 / NCIMB 14063 / MR-1).